A 446-amino-acid polypeptide reads, in one-letter code: MRVVKVKKTVVIIGGGAAGMSAASRVKRLKPEWDVKVFEATEWVSHAPCGIPYVVEGISPTEKLMHYPPEVFIKKRGIDLHLNAEVIEVDTGYVRVREKDGEKSYEWDYLVFANGASPQVPAIEGVDLKGVFTADLPPDAVAIREYMEKNRVEDVVIVGGGYIGLEMAEAFVAQGKRVTMIVRGERILRRSFDKEVTDIIEEKLKQHVNLRLQEIVLRIEGKDRVEKVVTDAGEYRADLVILATGIKPNIELARQLGVRIGETGAIWTNEKMQTSVENVYAAGDVAETKHVITGRRVWVPLAPPGNKMGYVAGSNIAGKEIHFPGVLGTTVTKFLDVEIGKTGLTETEALKEGYDIRTAFIKASTRPHYYPGGKEIWLKGVVDNETNRLLGVQAVGAEILPRIDAAAAMLMANFTTKDAFFTDLAYAPPFAPVWDPLVVLARVLKF.

An FAD-binding site is contributed by 17-18 (AA). Arg-28 serves as a coordination point for CoA. Residues 39 to 40 (EA) and 46 to 48 (HAP) each bind FAD. CoA-binding positions include 45 to 49 (SHAPC), 66 to 67 (HY), and Arg-76. The active-site Redox-active is Cys-49. Residues Val-86, Asp-284, and Ala-302 each contribute to the FAD site. CoA contacts are provided by Asn-306 and Lys-362. Position 426 (Tyr-426) interacts with FAD. 2 residues coordinate CoA: Trp-434 and Arg-442.

It belongs to the class-III pyridine nucleotide-disulfide oxidoreductase family. FAD serves as cofactor.

It catalyses the reaction hydrogen sulfide + NADP(+) = sulfur + NADPH. It carries out the reaction hydrogen sulfide + NAD(+) = sulfur + NADH. Functionally, catalyzes the CoA-dependent reduction of elemental sulfur (S(0)) to produce hydrogen sulfide. This is NAD(P)H sulfur oxidoreductase (CoA-dependent) from Pyrococcus abyssi (strain GE5 / Orsay).